A 234-amino-acid chain; its full sequence is MEFSPPLQRATLIQRYKRFLADVITPDGRELTLHCPNTGAMTGCATPGDTVWYSTSDNTKRKYPHTWELTQSQSGAFICVNTLWANRLTKEAILNESISELSGYSSLKSEVKYGSERSRIDFMLQADSRPDCYIEVKSVTLAENEQGYFPDAVTERGQKHLRELMSVAAEGQRAVIFFAVLHSAITRFSPARHIDEKYAQLLSEAQQRGVEILAYKAEISAEGMALKKSLPVTL.

Positions 201–220 (LLSEAQQRGVEILAYKAEIS) form a DNA-binding region, H-T-H motif.

The protein belongs to the SfsA family.

Functionally, binds to DNA non-specifically. Could be a regulatory factor involved in maltose metabolism. This Shigella flexneri protein is Sugar fermentation stimulation protein A.